Here is a 316-residue protein sequence, read N- to C-terminus: Olfactory receptor 1165 (316 aa).

The Extracellular segment spans residues 1–28; it reads MMLDLGNESSVTMFILSGFSEYPHLHAP. Asn-7 carries an N-linked (GlcNAc...) asparagine glycan. Residues 29–50 form a helical membrane-spanning segment; it reads LFLLFFMIYTVTLIGNLGIIVV. Residues 51–61 lie on the Cytoplasmic side of the membrane; the sequence is RKVNPKLHTPM. Residues 62 to 80 form a helical membrane-spanning segment; it reads YFFLSHLSFLDICYSSVFT. Topologically, residues 81-99 are extracellular; it reads PKLLEILIVEDRTISFKGC. Cys-99 and Cys-181 are joined by a disulfide. Residues 100–122 traverse the membrane as a helical segment; that stretch reads MTQFFLICAFVITEMFMLAVMAY. Topologically, residues 123 to 141 are cytoplasmic; that stretch reads DRFVAVCNPLLYTVSMSPK. A helical transmembrane segment spans residues 142-166; it reads LCAFLVAGTYMWGVLCSLTITYSLL. The Extracellular segment spans residues 167-205; the sequence is QLSYCGPNIINHFGCEYSAILSLSCSDPTFSQVVCLTIS. A helical transmembrane segment spans residues 206-228; sequence IFNETCSLLIILASYVFIVVTII. Residues 229 to 239 lie on the Cytoplasmic side of the membrane; it reads KMPSKGGLQKA. The chain crosses the membrane as a helical span at residues 240 to 263; it reads FSTCSSHLTAISIFHGIILLLYCV. The Extracellular portion of the chain corresponds to 264-268; the sequence is PNSKN. The helical transmembrane segment at 269-291 threads the bilayer; sequence SWLVVKVATVLFTVMIPMLNPLI. Over 292–316 the chain is Cytoplasmic; it reads YSLRNKDVKGTVSRLMHLKLQAHST.

This sequence belongs to the G-protein coupled receptor 1 family.

It localises to the cell membrane. Olfactory receptor. The sequence is that of Olfactory receptor 1165 from Mus musculus (Mouse).